We begin with the raw amino-acid sequence, 154 residues long: Protein ripply (154 aa).

Residues 38–41 (WRPW) carry the WRPW motif motif. 2 disordered regions span residues 54–86 (IRER…FQHP) and 121–154 (EDPA…PILN). A ripply homology domain region spans residues 85-119 (HPVKLHWSKPVYDYMYQYGKQLLDAFPVQATICIV). The segment covering 121 to 140 (EDPAQSDDSDFESDYEDDSD) has biased composition (acidic residues).

It belongs to the ripply family. In terms of tissue distribution, in the late gastrula stage, expression appears in the dorsal presomitic mesoderm and in the first three pairs of nascent somites. Expressed strongly in forming somites and then expression is rapidly down-regulated except in the first somite pair where expression is maintained for a longer period. Also expressed in the presumptive notochord and in the tail bud at the 48 hour larval stage. Expression disappears by the 72 hour stage.

The protein resides in the nucleus. May play a role in somitogenesis. The chain is Protein ripply from Branchiostoma belcheri (Amphioxus).